Consider the following 267-residue polypeptide: Putative [LysW]-aminoadipate/[LysW]-glutamate kinase (267 aa).

Residues Gly-37–Gly-38, Arg-64, and Asn-169 contribute to the substrate site.

Belongs to the acetylglutamate kinase family. LysZ subfamily.

The protein localises to the cytoplasm. It carries out the reaction [amino-group carrier protein]-C-terminal-N-(1,4-dicarboxybutan-1-yl)-L-glutamine + ATP = [amino-group carrier protein]-C-terminal-N-(1-carboxy-5-phosphooxy-5-oxopentan-1-yl)-L-glutamine + ADP. The catalysed reaction is [amino-group carrier protein]-C-terminal-gamma-(L-glutamyl)-L-glutamate + ATP = [amino-group carrier protein]-C-terminal-gamma-(5-phospho-L-glutamyl)-L-glutamate + ADP. The protein operates within amino-acid biosynthesis; L-lysine biosynthesis via AAA pathway; L-lysine from L-alpha-aminoadipate (Thermus route): step 2/5. It functions in the pathway amino-acid biosynthesis; L-arginine biosynthesis. Functionally, involved in both the arginine and lysine biosynthetic pathways. Phosphorylates the LysW-bound precursors glutamate (for arginine biosynthesis), respectively alpha-aminoadipate (for lysine biosynthesis). This is Putative [LysW]-aminoadipate/[LysW]-glutamate kinase from Nitrosopumilus maritimus (strain SCM1).